The chain runs to 353 residues: Thrombopoietin (353 aa).

The signal sequence occupies residues 1 to 21; it reads MELTELLLVVMLLLTARLTLS. A glycan (O-linked (GalNAc...) serine) is linked at S22. 2 disulfides stabilise this stretch: C28-C172 and C50-C106. T58, T131, T179, and T180 each carry an O-linked (GalNAc...) threonine glycan. S184 is a glycosylation site (O-linked (GalNAc...) serine). 2 N-linked (GlcNAc...) (complex) asparagine glycosylation sites follow: N197 and N206. T213 is a glycosylation site (O-linked (GalNAc...) threonine). 2 N-linked (GlcNAc...) (complex) asparagine glycosylation sites follow: N234 and N255. Residues 257 to 353 are disordered; the sequence is TRGLFPGPSR…THSQNLSQEG (97 aa). A glycan (O-linked (GalNAc...) serine) is linked at S265. Residues 275 to 304 show a composition bias toward polar residues; that stretch reads SSGTSDTGSLPPNLQPGYSPSPTHPPTGQY. Residues 324 to 335 are compositionally biased toward pro residues; that stretch reads LPDPSAPTPTPT. N-linked (GlcNAc...) asparagine glycans are attached at residues N340 and N348. The span at 343–353 shows a compositional bias: polar residues; it reads YTHSQNLSQEG.

It belongs to the EPO/TPO family. In terms of assembly, interacts with MPL/TPOR.

It localises to the secreted. Lineage-specific cytokine affecting the proliferation and maturation of megakaryocytes from their committed progenitor cells. It acts at a late stage of megakaryocyte development. It may be the major physiological regulator of circulating platelets. The protein is Thrombopoietin (THPO) of Homo sapiens (Human).